Reading from the N-terminus, the 277-residue chain is Putative serine/threonine-protein kinase PRKY (277 aa).

Positions M1 to A12 are enriched in low complexity. Residues M1–E40 are disordered. Residues C49–M277 enclose the Protein kinase domain. ATP contacts are provided by residues M55–V63 and K78. The Proton acceptor role is filled by D172. T203 is modified (phosphothreonine).

It belongs to the protein kinase superfamily. AGC Ser/Thr protein kinase family. cAMP subfamily. In terms of tissue distribution, ubiquitous.

The catalysed reaction is L-seryl-[protein] + ATP = O-phospho-L-seryl-[protein] + ADP + H(+). The enzyme catalyses L-threonyl-[protein] + ATP = O-phospho-L-threonyl-[protein] + ADP + H(+). The sequence is that of Putative serine/threonine-protein kinase PRKY (PRKY) from Homo sapiens (Human).